The sequence spans 419 residues: Cell division protein FtsZ (419 aa).

GTP contacts are provided by residues 22–26 (GGGGN), 109–111 (GSG), Glu140, Arg144, and Asp188. Residues 397–419 (ERFEAPISQDEDELDTPPFFKNR) are disordered.

It belongs to the FtsZ family. Homodimer. Polymerizes to form a dynamic ring structure in a strictly GTP-dependent manner. Interacts directly with several other division proteins. Interacts with CcrZ; the interaction is direct.

It localises to the cytoplasm. In terms of biological role, essential cell division protein that forms a contractile ring structure (Z ring) at the future cell division site. The regulation of the ring assembly controls the timing and the location of cell division. One of the functions of the FtsZ ring is to recruit other cell division proteins to the septum to produce a new cell wall between the dividing cells. Binds GTP and shows GTPase activity. This chain is Cell division protein FtsZ, found in Streptococcus pneumoniae serotype 2 (strain D39 / NCTC 7466).